Consider the following 159-residue polypeptide: Small ribosomal subunit protein uS9 (159 aa).

This sequence belongs to the universal ribosomal protein uS9 family.

The protein is Small ribosomal subunit protein uS9 of Rickettsia massiliae (strain Mtu5).